Reading from the N-terminus, the 412-residue chain is Regulator of microtubule dynamics protein 2 (412 aa).

The chain crosses the membrane as a helical span at residues 9 to 28; it reads LLLGIMAGTAGISLLVLWYH. S51 carries the phosphoserine modification. Residues 72-110 are a coiled coil; sequence QLQILEKLNELLTNVEELKEEIKFLKETIPKLEECIQDE. Residue S121 is modified to Phosphoserine. Residues 122-153 are disordered; that stretch reads PQHRARKKKTTTTTVQRPATSNSSEEAESEGG. T141 bears the Phosphothreonine mark. Phosphotyrosine is present on Y154. A phosphothreonine mark is found at T156 and T159.

Belongs to the RMDN family. In terms of assembly, interacts with microtubules.

It is found in the membrane. Its subcellular location is the cytoplasm. The protein resides in the cytoskeleton. It localises to the spindle. The protein localises to the spindle pole. The chain is Regulator of microtubule dynamics protein 2 (Rmdn2) from Rattus norvegicus (Rat).